A 116-amino-acid polypeptide reads, in one-letter code: NADH-ubiquinone oxidoreductase chain 3 (116 aa).

Helical transmembrane passes span 3–23, 56–76, and 85–105; these read LITTIIAITITLSAVLATISF, FFLIAILFLLFDLEIALLLPL, and PALTLAWSAAVLALLTLGLIY.

Belongs to the complex I subunit 3 family.

Its subcellular location is the mitochondrion membrane. The enzyme catalyses a ubiquinone + NADH + 5 H(+)(in) = a ubiquinol + NAD(+) + 4 H(+)(out). Core subunit of the mitochondrial membrane respiratory chain NADH dehydrogenase (Complex I) that is believed to belong to the minimal assembly required for catalysis. Complex I functions in the transfer of electrons from NADH to the respiratory chain. The immediate electron acceptor for the enzyme is believed to be ubiquinone. This is NADH-ubiquinone oxidoreductase chain 3 (MT-ND3) from Salmo salar (Atlantic salmon).